The following is a 180-amino-acid chain: MANLKTKYQQEVAPALQKQFNYKNVMMIPRLEKIVINVGLGEAVQNAKALDAAVADIAAIAGQRPVITRAKKSISSFKIRTGMPIGCKVTLRGERMWDFLEKLIYVALPRVRDFRGVSPKSFDGRGNYALGLKEQLLFPEIDYDKVDKIRGMDVIIVTTAKTDEEAKALLKGLGMPFAER.

It belongs to the universal ribosomal protein uL5 family. In terms of assembly, part of the 50S ribosomal subunit; part of the 5S rRNA/L5/L18/L25 subcomplex. Contacts the 5S rRNA and the P site tRNA. Forms a bridge to the 30S subunit in the 70S ribosome.

This is one of the proteins that bind and probably mediate the attachment of the 5S RNA into the large ribosomal subunit, where it forms part of the central protuberance. In the 70S ribosome it contacts protein S13 of the 30S subunit (bridge B1b), connecting the 2 subunits; this bridge is implicated in subunit movement. Contacts the P site tRNA; the 5S rRNA and some of its associated proteins might help stabilize positioning of ribosome-bound tRNAs. The sequence is that of Large ribosomal subunit protein uL5 from Symbiobacterium thermophilum (strain DSM 24528 / JCM 14929 / IAM 14863 / T).